Consider the following 176-residue polypeptide: Orotate phosphoribosyltransferase (176 aa).

5-phospho-alpha-D-ribose 1-diphosphate-binding positions include R90, K91, K94, and 116–124 (EDVTTTGGS). Orotate-binding residues include T120 and R148.

The protein belongs to the purine/pyrimidine phosphoribosyltransferase family. PyrE subfamily. As to quaternary structure, homodimer. Requires Mg(2+) as cofactor.

The catalysed reaction is orotidine 5'-phosphate + diphosphate = orotate + 5-phospho-alpha-D-ribose 1-diphosphate. It functions in the pathway pyrimidine metabolism; UMP biosynthesis via de novo pathway; UMP from orotate: step 1/2. Catalyzes the transfer of a ribosyl phosphate group from 5-phosphoribose 1-diphosphate to orotate, leading to the formation of orotidine monophosphate (OMP). The chain is Orotate phosphoribosyltransferase from Methanocaldococcus jannaschii (strain ATCC 43067 / DSM 2661 / JAL-1 / JCM 10045 / NBRC 100440) (Methanococcus jannaschii).